Here is a 2014-residue protein sequence, read N- to C-terminus: AP-1 accessory protein LAA1 (2014 aa).

In terms of assembly, interacts with the clathrin-associated adapter complex AP-1. Interacts directly with LAA2.

The protein resides in the golgi apparatus. It is found in the cytoplasmic vesicle. The protein localises to the clathrin-coated vesicle. Involved in localization of clathrin adapter protein complex-1 (AP-1) and subsequent AP-1-mediated clathrin-coated vesicle cargo loading. In complex with LAA2, cooperates with the small GTPase ARF1 and the phosphatidyl-inositol-4-phosphate (PI4P) synthesis to confer temporal specificity to AP-1 recruitment. This is AP-1 accessory protein LAA1 from Saccharomyces cerevisiae (strain ATCC 204508 / S288c) (Baker's yeast).